A 141-amino-acid chain; its full sequence is MGTLQGLLLWLLLGTGGAQAPRGPLRPLCRPVNATLAAENEACPVCITFTTSICAGYCPSMVRVLPAALPPVPQPVCTYRELRFASIRLPGCPPGVDPEVSFPVALSCRCGPCRLSSSDCGGPRAQPLACDLPHLPGLLFL.

A signal peptide spans 1 to 18 (MGTLQGLLLWLLLGTGGA). 6 disulfide bridges follow: Cys29-Cys77, Cys43-Cys92, Cys46-Cys130, Cys54-Cys108, Cys58-Cys110, and Cys113-Cys120. Residue Asn33 is glycosylated (N-linked (GlcNAc...) asparagine).

Belongs to the glycoprotein hormones subunit beta family. Heterodimer of a common alpha chain and a unique beta chain which confers biological specificity to thyrotropin, lutropin, follitropin and gonadotropin.

It localises to the secreted. Functionally, promotes spermatogenesis and ovulation by stimulating the testes and ovaries to synthesize steroids. This Oryctolagus cuniculus (Rabbit) protein is Lutropin subunit beta (LHB).